A 321-amino-acid chain; its full sequence is Probable arabinan endo-1,5-alpha-L-arabinosidase A (321 aa).

Positions 1–19 are cleaved as a signal peptide; sequence MSASAFVAVASCLAALVHG. The active-site Proton acceptor is the Asp34. Glu200 serves as the catalytic Proton donor.

The protein belongs to the glycosyl hydrolase 43 family.

It localises to the secreted. It carries out the reaction Endohydrolysis of (1-&gt;5)-alpha-arabinofuranosidic linkages in (1-&gt;5)-arabinans.. It participates in glycan metabolism; L-arabinan degradation. In terms of biological role, endo-1,5-alpha-L-arabinanase involved in degradation of pectin. Its preferred substrate is linear 1,5-alpha-L-arabinan. The protein is Probable arabinan endo-1,5-alpha-L-arabinosidase A (abnA) of Neosartorya fischeri (strain ATCC 1020 / DSM 3700 / CBS 544.65 / FGSC A1164 / JCM 1740 / NRRL 181 / WB 181) (Aspergillus fischerianus).